Here is a 328-residue protein sequence, read N- to C-terminus: Gonadotropin-releasing hormone receptor (328 aa).

At 1–38 (MANSASPEQNQNHCSAINNSIPLMQGNLPTLTLSGKIR) the chain is on the extracellular side. A glycan (N-linked (GlcNAc...) asparagine) is linked at Asn18. A helical membrane pass occupies residues 39–58 (VTVTFFLFLLSATFNASFLL). Topologically, residues 59–77 (KLQKWTQKKEKGKKLSRMK) are cytoplasmic. A helical transmembrane segment spans residues 78–97 (LLLKHLTLANLLETLIVMPL). The Extracellular segment spans residues 98–115 (DGMWNITVQWYAGELLCK). Asn102 carries N-linked (GlcNAc...) asparagine glycosylation. A disulfide bond links Cys114 and Cys196. Residues 116–137 (VLSYLKLFSMYAPAFMMVVISL) traverse the membrane as a helical segment. At 138–164 (DRSLAITRPLALKSNSKVGQSMVGLAW) the chain is on the cytoplasmic side. Residues 165 to 184 (ILSSVFAGPQLYIFRMIHLA) form a helical membrane-spanning segment. Topologically, residues 185-212 (DSSGQTKVFSQCVTHCSFSQWWHQAFYN) are extracellular. A helical membrane pass occupies residues 213–232 (FFTFSCLFIIPLFIMLICNA). At 233–281 (KIIFTLTRVLHQDPHELQLNQSKNNIPRARLKTLKMTVAFATSFTVCWT) the chain is on the cytoplasmic side. Residues 282-300 (PYYVLGIWYWFDPEMLNRL) traverse the membrane as a helical segment. Topologically, residues 301 to 306 (SDPVNH) are extracellular. A helical transmembrane segment spans residues 307-326 (FFFLFAFLNPCFDPLIYGYF). The Cytoplasmic segment spans residues 327–328 (SL).

The protein belongs to the G-protein coupled receptor 1 family. In terms of tissue distribution, pituitary, ovary, testis, breast and prostate but not in liver and spleen.

The protein resides in the cell membrane. Its function is as follows. Receptor for gonadotropin releasing hormone (GnRH) that mediates the action of GnRH to stimulate the secretion of the gonadotropic hormones luteinizing hormone (LH) and follicle-stimulating hormone (FSH). This receptor mediates its action by association with G-proteins that activate a phosphatidylinositol-calcium second messenger system. Isoform 2 may act as an inhibitor of GnRH-R signaling. The polypeptide is Gonadotropin-releasing hormone receptor (GNRHR) (Homo sapiens (Human)).